The chain runs to 192 residues: Small ribosomal subunit protein uS5 (192 aa).

Residues 20 to 83 (FVDRLVHINR…EAAKRGLIRV (64 aa)) enclose the S5 DRBM domain. Residues 165–192 (ARRGLKVSALQARRRDAEPGSADSADAA) are disordered.

It belongs to the universal ribosomal protein uS5 family. Part of the 30S ribosomal subunit. Contacts proteins S4 and S8.

Functionally, with S4 and S12 plays an important role in translational accuracy. Located at the back of the 30S subunit body where it stabilizes the conformation of the head with respect to the body. The chain is Small ribosomal subunit protein uS5 from Methylobacterium sp. (strain 4-46).